The primary structure comprises 89 residues: uncharacterized protein (89 aa).

The protein to M.jannaschii MJ1436.

This is an uncharacterized protein from Methanothermobacter thermautotrophicus (strain ATCC 29096 / DSM 1053 / JCM 10044 / NBRC 100330 / Delta H) (Methanobacterium thermoautotrophicum).